Here is a 551-residue protein sequence, read N- to C-terminus: RCC1 and BTB domain-containing protein 2 (551 aa).

RCC1 repeat units follow at residues 64–115 (NDEI…VLAT), 117–169 (DGEV…VLTS), 171–222 (GEVF…AVVD), 223–274 (TGEV…VLTD), 276–326 (GQIY…AAKS), and 328–382 (GGHV…TVAE). In terms of domain architecture, BTB spans 394-457 (ADLKFLVDGK…LYTDNISLPP (64 aa)).

Its subcellular location is the cytoplasmic vesicle. It is found in the secretory vesicle. The protein localises to the acrosome. This chain is RCC1 and BTB domain-containing protein 2 (Rcbtb2), found in Rattus norvegicus (Rat).